The sequence spans 220 residues: MSSLSKEAELVHEALLARGLETPLRKQELDAETRKTRIQEHMTQVMQLLNLDLSDDSLADTPRRIAKMYVDEIFSGLDYENFPKITLIENKMKVDEMVTVRDITLTSTCEHHFVTIDGKATVAYIPKDSVIGLSKINRIVQFFAQRPQVQERLTQQILLALQTLLGTNNVAVSIDAVHYCVKARGIRDATSATTTTSLGGLFKSSQNTRQEFLRAVRHNG.

Residues Cys109, His112, and Cys180 each contribute to the Zn(2+) site.

The protein belongs to the GTP cyclohydrolase I family. In terms of assembly, toroid-shaped homodecamer, composed of two pentamers of five dimers.

The catalysed reaction is GTP + H2O = 7,8-dihydroneopterin 3'-triphosphate + formate + H(+). Its pathway is cofactor biosynthesis; 7,8-dihydroneopterin triphosphate biosynthesis; 7,8-dihydroneopterin triphosphate from GTP: step 1/1. In Yersinia enterocolitica serotype O:8 / biotype 1B (strain NCTC 13174 / 8081), this protein is GTP cyclohydrolase 1.